Consider the following 217-residue polypeptide: tRNA (guanine-N(7)-)-methyltransferase (217 aa).

Glutamate 43, aspartate 68, asparagine 101, and asparagine 123 together coordinate S-adenosyl-L-methionine. Lysine 127 provides a ligand contact to substrate. The interaction with RNA stretch occupies residues 129–134 (RHNKRR). Substrate-binding positions include aspartate 159 and 196–199 (TEYE).

The protein belongs to the class I-like SAM-binding methyltransferase superfamily. TrmB family.

It carries out the reaction guanosine(46) in tRNA + S-adenosyl-L-methionine = N(7)-methylguanosine(46) in tRNA + S-adenosyl-L-homocysteine. It participates in tRNA modification; N(7)-methylguanine-tRNA biosynthesis. Its function is as follows. Catalyzes the formation of N(7)-methylguanine at position 46 (m7G46) in tRNA. In Clostridium botulinum (strain Langeland / NCTC 10281 / Type F), this protein is tRNA (guanine-N(7)-)-methyltransferase.